Reading from the N-terminus, the 192-residue chain is LOB domain-containing protein 32 (192 aa).

The 102-residue stretch at N4–L105 folds into the LOB domain.

It belongs to the LOB domain-containing protein family.

This is LOB domain-containing protein 32 (LBD32) from Arabidopsis thaliana (Mouse-ear cress).